A 456-amino-acid chain; its full sequence is Exodeoxyribonuclease 7 large subunit (456 aa).

Belongs to the XseA family. Heterooligomer composed of large and small subunits.

It is found in the cytoplasm. The enzyme catalyses Exonucleolytic cleavage in either 5'- to 3'- or 3'- to 5'-direction to yield nucleoside 5'-phosphates.. Functionally, bidirectionally degrades single-stranded DNA into large acid-insoluble oligonucleotides, which are then degraded further into small acid-soluble oligonucleotides. The polypeptide is Exodeoxyribonuclease 7 large subunit (Lactobacillus johnsonii (strain CNCM I-12250 / La1 / NCC 533)).